The chain runs to 291 residues: Formamidopyrimidine-DNA glycosylase (291 aa).

P2 (schiff-base intermediate with DNA) is an active-site residue. Residue E3 is the Proton donor of the active site. The Proton donor; for beta-elimination activity role is filled by K58. DNA contacts are provided by H100, R123, and K166. The segment at 257-291 (SVYGREGKECSRCGMHIVRIVQSGRSSFYCPQCQK) adopts an FPG-type zinc-finger fold. R281 (proton donor; for delta-elimination activity) is an active-site residue.

This sequence belongs to the FPG family. As to quaternary structure, monomer. Requires Zn(2+) as cofactor.

The enzyme catalyses Hydrolysis of DNA containing ring-opened 7-methylguanine residues, releasing 2,6-diamino-4-hydroxy-5-(N-methyl)formamidopyrimidine.. It catalyses the reaction 2'-deoxyribonucleotide-(2'-deoxyribose 5'-phosphate)-2'-deoxyribonucleotide-DNA = a 3'-end 2'-deoxyribonucleotide-(2,3-dehydro-2,3-deoxyribose 5'-phosphate)-DNA + a 5'-end 5'-phospho-2'-deoxyribonucleoside-DNA + H(+). Involved in base excision repair of DNA damaged by oxidation or by mutagenic agents. Acts as a DNA glycosylase that recognizes and removes damaged bases. Has a preference for oxidized purines, such as 7,8-dihydro-8-oxoguanine (8-oxoG). Has AP (apurinic/apyrimidinic) lyase activity and introduces nicks in the DNA strand. Cleaves the DNA backbone by beta-delta elimination to generate a single-strand break at the site of the removed base with both 3'- and 5'-phosphates. The polypeptide is Formamidopyrimidine-DNA glycosylase (Bartonella bacilliformis (strain ATCC 35685 / KC583 / Herrer 020/F12,63)).